The chain runs to 366 residues: Phospho-N-acetylmuramoyl-pentapeptide-transferase (366 aa).

10 helical membrane-spanning segments follow: residues 27 to 47 (AALF…INSL), 71 to 91 (TPTM…LLWA), 93 to 113 (LSNV…AIGF), 134 to 154 (LGIE…TALA), 174 to 194 (FLIN…VGAG), 205 to 225 (GLAI…AYLA), 245 to 265 (LAVV…FNAP), 268 to 288 (AIFM…TVAV), 294 to 314 (IVMA…IIQV), and 343 to 363 (QVVI…LSTL).

This sequence belongs to the glycosyltransferase 4 family. MraY subfamily. It depends on Mg(2+) as a cofactor.

It localises to the cell inner membrane. The enzyme catalyses UDP-N-acetyl-alpha-D-muramoyl-L-alanyl-gamma-D-glutamyl-meso-2,6-diaminopimeloyl-D-alanyl-D-alanine + di-trans,octa-cis-undecaprenyl phosphate = di-trans,octa-cis-undecaprenyl diphospho-N-acetyl-alpha-D-muramoyl-L-alanyl-D-glutamyl-meso-2,6-diaminopimeloyl-D-alanyl-D-alanine + UMP. It participates in cell wall biogenesis; peptidoglycan biosynthesis. Its function is as follows. Catalyzes the initial step of the lipid cycle reactions in the biosynthesis of the cell wall peptidoglycan: transfers peptidoglycan precursor phospho-MurNAc-pentapeptide from UDP-MurNAc-pentapeptide onto the lipid carrier undecaprenyl phosphate, yielding undecaprenyl-pyrophosphoryl-MurNAc-pentapeptide, known as lipid I. The protein is Phospho-N-acetylmuramoyl-pentapeptide-transferase of Rhizobium etli (strain ATCC 51251 / DSM 11541 / JCM 21823 / NBRC 15573 / CFN 42).